Reading from the N-terminus, the 465-residue chain is VGFKAGVKEYKLTYHTPEYETKDTDILAAFRVTPQPGVPPEEAGAAVAAESSTGTWTTVWTDGLTSLDRYKGRCYHIEPVPGEESQFIAYVAYPLDLFEEGSVTNMFTSIVGXVFGFKALRALRLEDLRIPPAYVKTFQGPPHGIQVERDKLNKYGRPLLGCTIKPKLGLSAKNYGRAVYECLRGGLDFTKDDENVNSQPFMRWRDRFLFCAEAIYKAQAETGEIKGHYLNATAGTCEEMIKRAVFARELGVPIVMHDYLTGGFTANTSLAHYCRDNGLLLHIHRAMHAVIDRQKNHGMHFRVLAKALRMSGGDHVHSGTVVGKLEGEREITLGFVDLLRDDFIEKDRSRGIFFTQDWVSLPGVLPVASGGIHVWHXPALTEIFGDDSVLQFGGGTLGHXWGNAPGAVANRVALEACVQARNEGXDLAREGNEIIREASKWSPELAAACEIWKEIKFEFEAMDTL.

At lysine 4 the chain carries N6,N6,N6-trimethyllysine. Positions 113 and 163 each coordinate substrate. Catalysis depends on lysine 165, which acts as the Proton acceptor. Position 167 (lysine 167) interacts with substrate. Mg(2+) contacts are provided by lysine 191, aspartate 193, and glutamate 194. Position 191 is an N6-carboxylysine (lysine 191). Residue histidine 284 is the Proton acceptor of the active site. Residues arginine 285, histidine 317, and serine 369 each coordinate substrate.

Belongs to the RuBisCO large chain family. Type I subfamily. Heterohexadecamer of 8 large chains and 8 small chains; disulfide-linked. The disulfide link is formed within the large subunit homodimers. Requires Mg(2+) as cofactor. In terms of processing, the disulfide bond which can form in the large chain dimeric partners within the hexadecamer appears to be associated with oxidative stress and protein turnover.

It localises to the plastid. The protein resides in the chloroplast. The enzyme catalyses 2 (2R)-3-phosphoglycerate + 2 H(+) = D-ribulose 1,5-bisphosphate + CO2 + H2O. It catalyses the reaction D-ribulose 1,5-bisphosphate + O2 = 2-phosphoglycolate + (2R)-3-phosphoglycerate + 2 H(+). Its function is as follows. RuBisCO catalyzes two reactions: the carboxylation of D-ribulose 1,5-bisphosphate, the primary event in carbon dioxide fixation, as well as the oxidative fragmentation of the pentose substrate in the photorespiration process. Both reactions occur simultaneously and in competition at the same active site. In Cornus obliqua (Silky dogwood), this protein is Ribulose bisphosphate carboxylase large chain.